Reading from the N-terminus, the 880-residue chain is Valine--tRNA ligase (880 aa).

Residues 47 to 57 carry the 'HIGH' region motif; the sequence is PNITGKLHLGH. Residues 526-530 carry the 'KMSKS' region motif; it reads KMSKS. An ATP-binding site is contributed by Lys529. A coiled-coil region spans residues 810–845; it reads LLDLVDREKELERLNKEKTKLEGEILRVEKKLSNER.

Belongs to the class-I aminoacyl-tRNA synthetase family. ValS type 1 subfamily. Monomer.

The protein localises to the cytoplasm. It carries out the reaction tRNA(Val) + L-valine + ATP = L-valyl-tRNA(Val) + AMP + diphosphate. In terms of biological role, catalyzes the attachment of valine to tRNA(Val). As ValRS can inadvertently accommodate and process structurally similar amino acids such as threonine, to avoid such errors, it has a 'posttransfer' editing activity that hydrolyzes mischarged Thr-tRNA(Val) in a tRNA-dependent manner. The protein is Valine--tRNA ligase of Clostridium perfringens (strain 13 / Type A).